We begin with the raw amino-acid sequence, 119 residues long: Beta-2-microglobulin (119 aa).

A signal peptide spans 1–20 (MARSVTVIFLVLVSLAVVLA). In terms of domain architecture, Ig-like C1-type spans 25 to 114 (PQIQVYSRHP…VTLKEPKTVT (90 aa)). A disulfide bridge connects residues Cys45 and Cys100.

This sequence belongs to the beta-2-microglobulin family. In terms of assembly, heterodimer of an alpha chain and a beta chain. Beta-2-microglobulin is the beta-chain of major histocompatibility complex class I molecules. Forms a heterotrimer with MR1 and a metabolite antigen.

The protein localises to the secreted. In terms of biological role, component of the class I major histocompatibility complex (MHC). Involved in the presentation of peptide antigens to the immune system. This is Beta-2-microglobulin (B2m) from Rattus norvegicus (Rat).